Reading from the N-terminus, the 140-residue chain is MSVPASSFLLLCFLMNSFSPAQSYILPHCEPVNETVSVEKDGCPKCLVFQTAICSGHCLTKEPVYKSPFSNIYQHVCTYRDVRYETVRLPDCRPGVDPHVTYPVALSCECTLCTMDTSDCTIESLNPDFCMTQKEYILDY.

The N-terminal stretch at 1–23 (MSVPASSFLLLCFLMNSFSPAQS) is a signal peptide. 6 cysteine pairs are disulfide-bonded: Cys-29/Cys-77, Cys-43/Cys-92, Cys-46/Cys-130, Cys-54/Cys-108, Cys-58/Cys-110, and Cys-113/Cys-120. N-linked (GlcNAc...) asparagine glycosylation is present at Asn-33.

This sequence belongs to the glycoprotein hormones subunit beta family. In terms of assembly, heterodimer of an alpha and a beta chain.

Its subcellular location is the secreted. In terms of biological role, involved in gametogenesis and steroidogenesis. This Ictalurus punctatus (Channel catfish) protein is Gonadotropin subunit beta-2 (cgbb).